A 470-amino-acid chain; its full sequence is MSNIYIQEPPTNGKVLLKTSAGDIDIELWSKETPKACRNFVQLCMEGYYDGTIFHRMVPEFIVQGGDPTGTGTGGESIYGRPFKDEFHSRLRFNRRGLVAMANAGPHDNGSQFFFTLGRADELNNKHTIFGKVTGDTVYNMLRLADVACDGDERPLNPHKIRSTEVLHSPFDDIIPREIKGKKEKNKDEAKKSQSKATKNFSLLSFGEEAEEDEEMVNQVSQTMKGKSKSSHDLLKDDPKLSSVPVVDRNQGEGDFEDSDDDEDDAEDDSDREAEKAKVRENIAKKLKKDKTDEEKSSQDLVKKTSRSDELRKEARQLKKELLAIKQRKEDGVKKEEDVSEVGDSKQNSEAVTEYLESRKKYDDMRKQKLKKGSGREAQTLALLESFKSKLSSAISETPSAPEEDVEELAEDDDKGWMAHVLHFDEQSRKVKDANMQDEDTFEIYDPRNPVNKRRREESKKLLKDKKARR.

One can recognise a PPIase cyclophilin-type domain in the interval 11 to 166 (TNGKVLLKTS…NPHKIRSTEV (156 aa)). 2 stretches are compositionally biased toward basic and acidic residues: residues 172 to 192 (DDII…EAKK) and 230 to 240 (SSHDLLKDDPK). Disordered regions lie at residues 172-377 (DDII…SGRE) and 428-470 (SRKV…KARR). A compositionally biased stretch (acidic residues) spans 254-272 (GDFEDSDDDEDDAEDDSDR). 2 stretches are compositionally biased toward basic and acidic residues: residues 273–337 (EAEK…KKEE) and 356–367 (LESRKKYDDMRK). The stretch at 281–332 (ENIAKKLKKDKTDEEKSSQDLVKKTSRSDELRKEARQLKKELLAIKQRKEDG) forms a coiled coil.

This sequence belongs to the cyclophilin-type PPIase family. In terms of assembly, part of the activated spliceosome B/catalytic step 1 spliceosome, one of the forms of the spliceosome which has a well-formed active site but still cannot catalyze the branching reaction and is composed at least of 52 proteins, the U2, U5 and U6 snRNAs and the pre-mRNA. Recruited during early steps of activated spliceosome B maturation, it is probably one of the first proteins released from this complex as he matures to the spliceosome C complex. Component of the minor spliceosome, which splices U12-type introns.

It localises to the nucleus. Functionally, as part of the spliceosome, plays a role in pre-mRNA splicing. Probable inactive PPIase with no peptidyl-prolyl cis-trans isomerase activity. In Danio rerio (Zebrafish), this protein is Spliceosome-associated protein CWC27 homolog (cwc27).